Reading from the N-terminus, the 89-residue chain is uncharacterized protein (89 aa).

A helical membrane pass occupies residues 28–50; that stretch reads LYLDLGFSALLFYNSNLLFSFIL.

It is found in the membrane. This is an uncharacterized protein from Archaeoglobus fulgidus (strain ATCC 49558 / DSM 4304 / JCM 9628 / NBRC 100126 / VC-16).